A 244-amino-acid chain; its full sequence is Triosephosphate isomerase (244 aa).

8-10 contributes to the substrate binding site; that stretch reads NWK. Histidine 93 functions as the Electrophile in the catalytic mechanism. The active-site Proton acceptor is the glutamate 161. Substrate contacts are provided by residues glycine 167, serine 206, and 227–228; that span reads GG.

This sequence belongs to the triosephosphate isomerase family. Homodimer.

Its subcellular location is the cytoplasm. It carries out the reaction D-glyceraldehyde 3-phosphate = dihydroxyacetone phosphate. Its pathway is carbohydrate biosynthesis; gluconeogenesis. The protein operates within carbohydrate degradation; glycolysis; D-glyceraldehyde 3-phosphate from glycerone phosphate: step 1/1. Functionally, involved in the gluconeogenesis. Catalyzes stereospecifically the conversion of dihydroxyacetone phosphate (DHAP) to D-glyceraldehyde-3-phosphate (G3P). In Deinococcus radiodurans (strain ATCC 13939 / DSM 20539 / JCM 16871 / CCUG 27074 / LMG 4051 / NBRC 15346 / NCIMB 9279 / VKM B-1422 / R1), this protein is Triosephosphate isomerase.